A 197-amino-acid polypeptide reads, in one-letter code: Outer membrane protein 26 (197 aa).

A signal peptide spans 1–23 (MKNIAKVTALALGIALASGYASA).

Belongs to the Skp family.

The protein localises to the cell outer membrane. The chain is Outer membrane protein 26 (omp26) from Haemophilus influenzae (strain ATCC 51907 / DSM 11121 / KW20 / Rd).